The primary structure comprises 403 residues: Acetyl-CoA acetyltransferase 2 (403 aa).

Residue Cys-97 is the Acyl-thioester intermediate of the active site. Lys-237 is a binding site for CoA. K(+) is bound at residue Ala-254. Ser-258 is a CoA binding site. Residue Val-355 participates in K(+) binding. Residues His-359 and Cys-389 each act as proton acceptor in the active site.

Belongs to the thiolase-like superfamily. Thiolase family. In terms of tissue distribution, expressed in root tips, emerging leaves, young leaves, stems, and anthers at the microspore stage.

The protein resides in the cytoplasm. It localises to the peroxisome. The enzyme catalyses 2 acetyl-CoA = acetoacetyl-CoA + CoA. It participates in metabolic intermediate biosynthesis; (R)-mevalonate biosynthesis; (R)-mevalonate from acetyl-CoA: step 1/3. Functionally, catalyzes the condensation of two molecules of acetyl-CoA to produce acetoacetyl-CoA. Generates the bulk of the acetoacetyl-CoA precursor required for the cytosol-localized, mevalonate-derived isoprenoid biosynthesis. The generated isoprenoids are required for normal growth and development. Essential protein during embryogenesis. In Arabidopsis thaliana (Mouse-ear cress), this protein is Acetyl-CoA acetyltransferase 2.